We begin with the raw amino-acid sequence, 82 residues long: Small ribosomal subunit protein bS16 (82 aa).

The protein belongs to the bacterial ribosomal protein bS16 family.

This is Small ribosomal subunit protein bS16 from Francisella tularensis subsp. tularensis (strain FSC 198).